Reading from the N-terminus, the 227-residue chain is Ribose-5-phosphate isomerase A (227 aa).

Residues 26–29 (TGST), 82–85 (DGAD), and 95–98 (KGGG) contribute to the substrate site. Catalysis depends on glutamate 104, which acts as the Proton acceptor. Lysine 122 serves as a coordination point for substrate.

This sequence belongs to the ribose 5-phosphate isomerase family. In terms of assembly, homodimer.

The catalysed reaction is aldehydo-D-ribose 5-phosphate = D-ribulose 5-phosphate. The protein operates within carbohydrate degradation; pentose phosphate pathway; D-ribose 5-phosphate from D-ribulose 5-phosphate (non-oxidative stage): step 1/1. Functionally, catalyzes the reversible conversion of ribose-5-phosphate to ribulose 5-phosphate. The sequence is that of Ribose-5-phosphate isomerase A from Streptococcus equi subsp. zooepidemicus (strain H70).